We begin with the raw amino-acid sequence, 380 residues long: Cytochrome b (380 aa).

The next 4 helical transmembrane spans lie at 34–54, 78–99, 114–134, and 179–199; these read FGSL…FLAM, WLLR…YFHI, WNIG…GYVL, and FFTF…IHLL. Heme b-binding residues include His84 and His98. Heme b-binding residues include His183 and His197. His202 contacts a ubiquinone. A run of 4 helical transmembrane segments spans residues 227–247, 289–309, 321–341, and 348–368; these read YKDL…STFA, LGGV…PIIH, IAKT…WIGG, and FITI…LLIP.

It belongs to the cytochrome b family. The cytochrome bc1 complex contains 3 respiratory subunits (MT-CYB, CYC1 and UQCRFS1), 2 core proteins (UQCRC1 and UQCRC2) and probably 6 low-molecular weight proteins. Heme b serves as cofactor.

The protein localises to the mitochondrion inner membrane. Its function is as follows. Component of the ubiquinol-cytochrome c reductase complex (complex III or cytochrome b-c1 complex) that is part of the mitochondrial respiratory chain. The b-c1 complex mediates electron transfer from ubiquinol to cytochrome c. Contributes to the generation of a proton gradient across the mitochondrial membrane that is then used for ATP synthesis. This is Cytochrome b (mt-cyb) from Rana amurensis (Siberian wood frog).